The primary structure comprises 883 residues: Valine--tRNA ligase (883 aa).

A 'HIGH' region motif is present at residues 46–56 (PNVTGKLHLGH). The 'KMSKS' region signature appears at 520–524 (KMSKS). Lys-523 contributes to the ATP binding site. Positions 809–883 (LADLLNVEEE…RIDEMKKLVK (75 aa)) form a coiled coil.

The protein belongs to the class-I aminoacyl-tRNA synthetase family. ValS type 1 subfamily. Monomer.

It localises to the cytoplasm. It carries out the reaction tRNA(Val) + L-valine + ATP = L-valyl-tRNA(Val) + AMP + diphosphate. In terms of biological role, catalyzes the attachment of valine to tRNA(Val). As ValRS can inadvertently accommodate and process structurally similar amino acids such as threonine, to avoid such errors, it has a 'posttransfer' editing activity that hydrolyzes mischarged Thr-tRNA(Val) in a tRNA-dependent manner. In Streptococcus pneumoniae serotype 4 (strain ATCC BAA-334 / TIGR4), this protein is Valine--tRNA ligase.